The primary structure comprises 474 residues: tRNA-2-methylthio-N(6)-dimethylallyladenosine synthase (474 aa).

The region spanning 3–120 (KKLHIKTWGC…LPEMINSVRG (118 aa)) is the MTTase N-terminal domain. [4Fe-4S] cluster is bound by residues Cys-12, Cys-49, Cys-83, Cys-157, Cys-161, and Cys-164. A Radical SAM core domain is found at 143–375 (RAEGPTAFVS…QERINQQAMA (233 aa)). One can recognise a TRAM domain in the interval 378 to 441 (RRMLGTTQRI…PNSLRGKVVR (64 aa)).

This sequence belongs to the methylthiotransferase family. MiaB subfamily. As to quaternary structure, monomer. The cofactor is [4Fe-4S] cluster.

The protein resides in the cytoplasm. The catalysed reaction is N(6)-dimethylallyladenosine(37) in tRNA + (sulfur carrier)-SH + AH2 + 2 S-adenosyl-L-methionine = 2-methylsulfanyl-N(6)-dimethylallyladenosine(37) in tRNA + (sulfur carrier)-H + 5'-deoxyadenosine + L-methionine + A + S-adenosyl-L-homocysteine + 2 H(+). Catalyzes the methylthiolation of N6-(dimethylallyl)adenosine (i(6)A), leading to the formation of 2-methylthio-N6-(dimethylallyl)adenosine (ms(2)i(6)A) at position 37 in tRNAs that read codons beginning with uridine. The polypeptide is tRNA-2-methylthio-N(6)-dimethylallyladenosine synthase (Escherichia coli O81 (strain ED1a)).